Reading from the N-terminus, the 320-residue chain is Adenosine receptor A3 (320 aa).

The Extracellular portion of the chain corresponds to 1–16 (MKANNTTTSALWLQIT). N-linked (GlcNAc...) asparagine glycans are attached at residues Asn4 and Asn5. The chain crosses the membrane as a helical span at residues 17 to 39 (YITMEAAIGLCAVVGNMLVIWVV). At 40 to 50 (KLNRTLRTTTF) the chain is on the cytoplasmic side. A helical transmembrane segment spans residues 51-74 (YFIVSLALADIAVGVLVIPLAIAV). The Extracellular segment spans residues 75-86 (SLEVQMHFYACL). Residues Cys85 and Cys168 are joined by a disulfide bond. The helical transmembrane segment at 87-108 (FMSCVLLVFTHASIMSLLAIAV) threads the bilayer. Residues 109–128 (DRYLRVKLTVRYRTVTTQRR) are Cytoplasmic-facing. Residues 129–150 (IWLFLGLCWLVSFLVGLTPMFG) form a helical membrane-spanning segment. The Extracellular portion of the chain corresponds to 151-179 (WNRKVTLELSQNSSTLSCHFRSVVGLDYM). A helical membrane pass occupies residues 180-200 (VFFSFITWILIPLVVMCIIYL). The Cytoplasmic segment spans residues 201–233 (DIFYIIRNKLSQNLTGFRETRAFYGREFKTAKS). Residues 234 to 257 (LFLVLFLFALCWLPLSIINFVSYF) traverse the membrane as a helical segment. The Extracellular segment spans residues 258 to 263 (NVKIPE). A helical membrane pass occupies residues 264-286 (IAMCLGILLSHANSMMNPIVYAC). Residues 287 to 320 (KIKKFKETYFVILRACRLCQTSDSLDSNLEQTTE) are Cytoplasmic-facing. Cys305 carries the S-palmitoyl cysteine lipid modification. A phosphothreonine mark is found at Thr307, Thr318, and Thr319.

This sequence belongs to the G-protein coupled receptor 1 family. Phosphorylation on Thr-318 and Thr-319 may be crucial for rapid desensitization. Phosphorylation on Thr-318 may be necessary for phosphorylation on Thr-319 to occur. As to expression, testis, particularly in spermatocytes and spermatids but not in spermatogonia. Low levels in the brain.

The protein resides in the cell membrane. Receptor for adenosine. The activity of this receptor is mediated by G proteins which inhibits adenylyl cyclase. May play a role during reproduction. The protein is Adenosine receptor A3 (Adora3) of Rattus norvegicus (Rat).